The chain runs to 327 residues: MQNLENIVAEALQAVEKASDVASLEALRVEYFGKKGHFTLLMQGLRDVPADERPAVGAKINEAKQKAQDALNGKKEQLETEELNAKLASESIDVSLPGRKTELGGLHPVSITIERVVKFFSELGFSVEKGPEIETDYYNFDALNIPAHHPARADHDTFWFDAERLLRTQTSGVQIRTMEKMQPPIRIMAPGRVYRNDYDQTHTPMFHQIELLYVDKKANFTELKGLLHDFLRAFFEEDLQVRFRPSYFPFTEPSAEVDVMGKNGKWLEVLGCGMVHPNVLRNVGIDPDEYTGFAVGMGVERLTMLRYNVTDLRSFFENDLRFLKQFK.

E252 is a Mg(2+) binding site.

The protein belongs to the class-II aminoacyl-tRNA synthetase family. Phe-tRNA synthetase alpha subunit type 1 subfamily. Tetramer of two alpha and two beta subunits. Mg(2+) is required as a cofactor.

It is found in the cytoplasm. It carries out the reaction tRNA(Phe) + L-phenylalanine + ATP = L-phenylalanyl-tRNA(Phe) + AMP + diphosphate + H(+). The chain is Phenylalanine--tRNA ligase alpha subunit from Glaesserella parasuis serovar 5 (strain SH0165) (Haemophilus parasuis).